A 123-amino-acid polypeptide reads, in one-letter code: Small ribosomal subunit protein uS12 (123 aa).

D89 carries the 3-methylthioaspartic acid modification.

The protein belongs to the universal ribosomal protein uS12 family. In terms of assembly, part of the 30S ribosomal subunit. Contacts proteins S8 and S17. May interact with IF1 in the 30S initiation complex.

With S4 and S5 plays an important role in translational accuracy. Its function is as follows. Interacts with and stabilizes bases of the 16S rRNA that are involved in tRNA selection in the A site and with the mRNA backbone. Located at the interface of the 30S and 50S subunits, it traverses the body of the 30S subunit contacting proteins on the other side and probably holding the rRNA structure together. The combined cluster of proteins S8, S12 and S17 appears to hold together the shoulder and platform of the 30S subunit. This is Small ribosomal subunit protein uS12 from Bifidobacterium animalis subsp. lactis (strain AD011).